Here is a 381-residue protein sequence, read N- to C-terminus: Lipopolysaccharide 1,2-N-acetylglucosaminetransferase (381 aa).

Belongs to the glycosyltransferase group 1 family. Glycosyltransferase 4 subfamily.

The protein localises to the cell inner membrane. The catalysed reaction is UDP-N-acetyl-alpha-D-glucosamine + [lipopolysaccharide] = UDP + N-acetyl-alpha-D-glucosaminyl-[lipopolysaccharide].. It participates in bacterial outer membrane biogenesis; LPS core biosynthesis. Functionally, transferase involved in the biosynthesis of the core oligosaccharide region of lipopolysaccharide (LPS). Catalyzes the addition of the terminal N-acetyl-D-glucosamine (GlcNAc) group to the outer-core glucose II, the last step of the lipid A-core oligosaccharide biosynthesis. The protein is Lipopolysaccharide 1,2-N-acetylglucosaminetransferase of Salmonella typhimurium (strain LT2 / SGSC1412 / ATCC 700720).